The sequence spans 196 residues: Large ribosomal subunit protein eL15 (196 aa).

2 disordered regions span residues S72–T93 and G163–K196.

The protein belongs to the eukaryotic ribosomal protein eL15 family. Part of the 50S ribosomal subunit. Interacts with protein L7Ae and weakly with L44e.

This Haloarcula marismortui (strain ATCC 43049 / DSM 3752 / JCM 8966 / VKM B-1809) (Halobacterium marismortui) protein is Large ribosomal subunit protein eL15 (rpl15e).